The chain runs to 391 residues: tRNA-specific 2-thiouridylase MnmA (391 aa).

ATP is bound by residues 35-42 and Leu61; that span reads GLSGGVDS. Cys122 serves as the catalytic Nucleophile. Cys122 and Cys221 form a disulfide bridge. Gly147 contacts ATP. The interaction with tRNA stretch occupies residues 171–173; it reads KDQ. Cys221 acts as the Cysteine persulfide intermediate in catalysis. Residues 328-329 form an interaction with tRNA region; the sequence is RY.

It belongs to the MnmA/TRMU family.

It is found in the cytoplasm. The catalysed reaction is S-sulfanyl-L-cysteinyl-[protein] + uridine(34) in tRNA + AH2 + ATP = 2-thiouridine(34) in tRNA + L-cysteinyl-[protein] + A + AMP + diphosphate + H(+). In terms of biological role, catalyzes the 2-thiolation of uridine at the wobble position (U34) of tRNA, leading to the formation of s(2)U34. This Synechococcus sp. (strain CC9311) protein is tRNA-specific 2-thiouridylase MnmA.